A 353-amino-acid chain; its full sequence is N-formyl peptide receptor 3 (353 aa).

Over 1–27 (METNFSIPLNETEEVLPEPAGHTVLWI) the chain is Extracellular. N-linked (GlcNAc...) asparagine glycans are attached at residues Asn4 and Asn10. Residues 28–50 (FSLLVHGVTFVFGVLGNGLVIWV) form a helical membrane-spanning segment. Over 51-61 (AGFRMTRTVNT) the chain is Cytoplasmic. A helical membrane pass occupies residues 62–83 (ICYLNLALADFSFSAILPFRMV). Over 84–100 (SVAMREKWPFGSFLCKL) the chain is Extracellular. Cysteines 98 and 176 form a disulfide. The helical transmembrane segment at 101 to 121 (VHVMIDINLFVSVYLITIIAL) threads the bilayer. Residues 122–140 (DRCICVLHPAWAQNHRTMS) lie on the Cytoplasmic side of the membrane. Residues 141–162 (LAKRVMTGLWIFTIVLTLPNFI) traverse the membrane as a helical segment. Residues 163 to 205 (FWTTISTTNGDTYCIFNFAFWGDTAVERLNVFITMAKVFLILH) lie on the Extracellular side of the membrane. Residues 206-226 (FIIGFSVPMSIITVCYGIIAA) form a helical membrane-spanning segment. Over 227–242 (KIHRNHMIKSSRPLRV) the chain is Cytoplasmic. A helical transmembrane segment spans residues 243–266 (FAAVVASFFICWFPYELIGILMAV). Topologically, residues 267–286 (WLKEMLLNGKYKIILVLINP) are extracellular. The chain crosses the membrane as a helical span at residues 287–306 (TSSLAFFNSCLNPILYVFMG). At 307 to 353 (RNFQERLIRSLPTSLERALTEVPDSAQTSNTDTTSASPPEETELQAM) the chain is on the cytoplasmic side. Positions 327–353 (EVPDSAQTSNTDTTSASPPEETELQAM) are disordered. The span at 331-343 (SAQTSNTDTTSAS) shows a compositional bias: polar residues.

Belongs to the G-protein coupled receptor 1 family. Detected in various tissues with highest expression in lung.

It localises to the cell membrane. In terms of biological role, low affinity receptor for N-formyl-methionyl peptides, which are powerful neutrophils chemotactic factors. Binding of FMLP to the receptor causes activation of neutrophils. This response is mediated via a G-protein that activates a phosphatidylinositol-calcium second messenger system. Acts as a receptor for humanin. This Homo sapiens (Human) protein is N-formyl peptide receptor 3 (FPR3).